Reading from the N-terminus, the 323-residue chain is Acetyl esterase (323 aa).

Positions 91–93 (HGG) match the Involved in the stabilization of the negatively charged intermediate by the formation of the oxyanion hole motif. Active-site residues include serine 165, aspartate 262, and histidine 292.

Belongs to the 'GDXG' lipolytic enzyme family. As to quaternary structure, homodimer. Interacts with MalT and MelA.

It localises to the cytoplasm. In terms of biological role, displays esterase activity towards short chain fatty esters (acyl chain length of up to 8 carbons). Able to hydrolyze triacetylglycerol (triacetin) and tributyrylglycerol (tributyrin), but not trioleylglycerol (triolein) or cholesterol oleate. Negatively regulates MalT activity by antagonizing maltotriose binding. Inhibits MelA galactosidase activity. The polypeptide is Acetyl esterase (Salmonella choleraesuis (strain SC-B67)).